Here is a 514-residue protein sequence, read N- to C-terminus: Protein phosphatase 1H (514 aa).

Ser-7 bears the Phosphoserine mark. In terms of domain architecture, PPM-type phosphatase spans Ala-77–Leu-507. A disordered region spans residues Ala-109 to Glu-135. A Phosphothreonine modification is found at Thr-113. Phosphoserine occurs at positions 124 and 211. Arg-213 carries the omega-N-methylarginine modification. Phosphoserine is present on Ser-221. Thr-224 carries the phosphothreonine modification. Phosphoserine is present on Ser-422.

It belongs to the PP2C family.

The protein resides in the nucleus. It is found in the cytoplasm. It catalyses the reaction O-phospho-L-seryl-[protein] + H2O = L-seryl-[protein] + phosphate. It carries out the reaction O-phospho-L-threonyl-[protein] + H2O = L-threonyl-[protein] + phosphate. Its function is as follows. Dephosphorylates CDKN1B at 'Thr-187', thus removing a signal for proteasomal degradation. The chain is Protein phosphatase 1H (PPM1H) from Homo sapiens (Human).